Here is a 346-residue protein sequence, read N- to C-terminus: Enoyl-[acyl-carrier-protein] reductase, mitochondrial (346 aa).

Residues 1–22 constitute a mitochondrion transit peptide; it reads MQKTIRSQALIYRKFGDPLKVL. Tyr-59 functions as the Proton donor in the catalytic mechanism. NADP(+) is bound by residues Asn-131, 157–160, 180–182, 249–252, 274–276, and Lys-332; these read NSGV, RNR, YGGM, and VAV.

Belongs to the zinc-containing alcohol dehydrogenase family. Quinone oxidoreductase subfamily. Homodimer.

It is found in the mitochondrion. The enzyme catalyses a 2,3-saturated acyl-[ACP] + NADP(+) = a (2E)-enoyl-[ACP] + NADPH + H(+). Functionally, catalyzes the NADPH-dependent reduction of trans-2-enoyl thioesters in mitochondrial fatty acid synthesis (fatty acid synthesis type II). Fatty acid chain elongation in mitochondria uses acyl carrier protein (ACP) as an acyl group carrier, but the enzyme accepts both ACP and CoA thioesters as substrates in vitro. May provide the octanoyl chain used for lipoic acid biosynthesis, regulating protein lipoylation and mitochondrial respiratory activity. Involved in iron homeostasis; affecting Fe-S cluster assembly and ceramide metabolism. Required for proper morphology and bioenergetic functions of mitochondria. Required for maintenance of neurons. This is Enoyl-[acyl-carrier-protein] reductase, mitochondrial from Caenorhabditis elegans.